A 576-amino-acid polypeptide reads, in one-letter code: Protein NRT1/ PTR FAMILY 2.12 (576 aa).

The next 11 helical transmembrane spans lie at 58 to 78 (FNVYYLWMGLTNFAPLLGALI), 89 to 109 (IAYASLFSILGLMTVTLTACL), 130 to 150 (KLQLGILFLGLGFLSIGSGGI), 176 to 196 (FFNWYYLTLTMVLIFSHTVVV), 203 to 223 (WVIGFSIPTSLMACAVVLFFV), 329 to 349 (VWSAGIISIVAMTTQATFMVF), 364 to 384 (IPAASITVISYITIGIWVPIY), 406 to 426 (MGIGIVFAILSMFTAGFVEGV), 441 to 461 (WLALPLILMGLCESFNFIGLI), 475 to 495 (IANSLFPLSFAAANYLSSLLV), and 522 to 542 (YFYYLIAVLGVVNLVYFWYCA).

It belongs to the major facilitator superfamily. Proton-dependent oligopeptide transporter (POT/PTR) (TC 2.A.17) family. Expressed in flowers and siliques. Expressed in vascular bundle of the siliques and in funiculus.

Its subcellular location is the cell membrane. Its function is as follows. Low-affinity proton-dependent nitrate transporter. Not involved in dipeptides transport. Involved in delivering nitrate for seed development. This chain is Protein NRT1/ PTR FAMILY 2.12 (NPF2.12), found in Arabidopsis thaliana (Mouse-ear cress).